We begin with the raw amino-acid sequence, 450 residues long: UDP-N-acetylmuramoylalanine--D-glutamate ligase (450 aa).

119-125 (GSNGKTT) is an ATP binding site.

It belongs to the MurCDEF family.

The protein localises to the cytoplasm. The catalysed reaction is UDP-N-acetyl-alpha-D-muramoyl-L-alanine + D-glutamate + ATP = UDP-N-acetyl-alpha-D-muramoyl-L-alanyl-D-glutamate + ADP + phosphate + H(+). The protein operates within cell wall biogenesis; peptidoglycan biosynthesis. In terms of biological role, cell wall formation. Catalyzes the addition of glutamate to the nucleotide precursor UDP-N-acetylmuramoyl-L-alanine (UMA). The polypeptide is UDP-N-acetylmuramoylalanine--D-glutamate ligase (Streptococcus pneumoniae (strain P1031)).